We begin with the raw amino-acid sequence, 705 residues long: Prolyl endopeptidase (705 aa).

A signal peptide spans Met-1–Ala-20. Catalysis depends on charge relay system residues Ser-556 and His-675.

It belongs to the peptidase S9A family. Monomer.

The protein localises to the periplasm. The catalysed reaction is Hydrolysis of Pro-|-Xaa &gt;&gt; Ala-|-Xaa in oligopeptides.. Its function is as follows. Cleaves peptide bonds on the C-terminal side of prolyl residues within peptides that are up to approximately 30 amino acids long. Has an absolute requirement for an X-Pro bond in the trans configuration immediately preceding the Pro-Y scissible bond. This chain is Prolyl endopeptidase (f1pep1), found in Elizabethkingia meningoseptica (Chryseobacterium meningosepticum).